A 317-amino-acid polypeptide reads, in one-letter code: tRNA(Ile)-lysidine synthase (317 aa).

32–37 (SGGVDS) lines the ATP pocket.

The protein belongs to the tRNA(Ile)-lysidine synthase family.

The protein resides in the cytoplasm. It catalyses the reaction cytidine(34) in tRNA(Ile2) + L-lysine + ATP = lysidine(34) in tRNA(Ile2) + AMP + diphosphate + H(+). In terms of biological role, ligates lysine onto the cytidine present at position 34 of the AUA codon-specific tRNA(Ile) that contains the anticodon CAU, in an ATP-dependent manner. Cytidine is converted to lysidine, thus changing the amino acid specificity of the tRNA from methionine to isoleucine. The chain is tRNA(Ile)-lysidine synthase from Aquifex aeolicus (strain VF5).